Reading from the N-terminus, the 257-residue chain is Glutamate racemase (257 aa).

Substrate contacts are provided by residues 12-13 and 44-45; these read DS and YG. C75 acts as the Proton donor/acceptor in catalysis. Position 76-77 (76-77) interacts with substrate; it reads NT. The active-site Proton donor/acceptor is the C185. Residue 186–187 coordinates substrate; the sequence is TH.

This sequence belongs to the aspartate/glutamate racemases family.

It carries out the reaction L-glutamate = D-glutamate. It participates in cell wall biogenesis; peptidoglycan biosynthesis. Its function is as follows. Provides the (R)-glutamate required for cell wall biosynthesis. The sequence is that of Glutamate racemase from Clostridium botulinum (strain ATCC 19397 / Type A).